A 329-amino-acid chain; its full sequence is 4-hydroxythreonine-4-phosphate dehydrogenase (329 aa).

Residues histidine 136 and threonine 137 each contribute to the substrate site. Residues histidine 166, histidine 211, and histidine 266 each contribute to the a divalent metal cation site. Residues lysine 274, asparagine 283, and arginine 292 each coordinate substrate.

Belongs to the PdxA family. Homodimer. Zn(2+) serves as cofactor. It depends on Mg(2+) as a cofactor. Requires Co(2+) as cofactor.

It is found in the cytoplasm. It carries out the reaction 4-(phosphooxy)-L-threonine + NAD(+) = 3-amino-2-oxopropyl phosphate + CO2 + NADH. It participates in cofactor biosynthesis; pyridoxine 5'-phosphate biosynthesis; pyridoxine 5'-phosphate from D-erythrose 4-phosphate: step 4/5. In terms of biological role, catalyzes the NAD(P)-dependent oxidation of 4-(phosphooxy)-L-threonine (HTP) into 2-amino-3-oxo-4-(phosphooxy)butyric acid which spontaneously decarboxylates to form 3-amino-2-oxopropyl phosphate (AHAP). In Escherichia coli (strain SE11), this protein is 4-hydroxythreonine-4-phosphate dehydrogenase.